We begin with the raw amino-acid sequence, 113 residues long: Probable 4-amino-4-deoxy-L-arabinose-phosphoundecaprenol flippase subunit ArnE (113 aa).

The next 3 helical transmembrane spans lie at 40–60 (FGWLMLAALLLGIGLLLWLLV), 64–84 (LPLGVAYPLLSINFVLVTLLA), and 92–112 (VDRHHWWGIALIVIGIYLMQG).

It belongs to the ArnE family. In terms of assembly, heterodimer of ArnE and ArnF.

The protein localises to the cell inner membrane. The protein operates within bacterial outer membrane biogenesis; lipopolysaccharide biosynthesis. In terms of biological role, translocates 4-amino-4-deoxy-L-arabinose-phosphoundecaprenol (alpha-L-Ara4N-phosphoundecaprenol) from the cytoplasmic to the periplasmic side of the inner membrane. This chain is Probable 4-amino-4-deoxy-L-arabinose-phosphoundecaprenol flippase subunit ArnE, found in Pectobacterium atrosepticum (strain SCRI 1043 / ATCC BAA-672) (Erwinia carotovora subsp. atroseptica).